The primary structure comprises 124 residues: Fluoride-specific ion channel FluC (124 aa).

A run of 4 helical transmembrane segments spans residues 5–25 (ILAV…AGTW), 38–58 (TLAV…WFLL), 69–89 (GLIV…LDTL), and 97–117 (ALIA…ATWA). Na(+) is bound by residues glycine 76 and threonine 79.

The protein belongs to the fluoride channel Fluc/FEX (TC 1.A.43) family.

Its subcellular location is the cell inner membrane. The enzyme catalyses fluoride(in) = fluoride(out). Its activity is regulated as follows. Na(+) is not transported, but it plays an essential structural role and its presence is essential for fluoride channel function. Its function is as follows. Fluoride-specific ion channel. Important for reducing fluoride concentration in the cell, thus reducing its toxicity. The polypeptide is Fluoride-specific ion channel FluC (Pseudomonas fluorescens (strain SBW25)).